The following is a 557-amino-acid chain: NADP-dependent malic enzyme (557 aa).

Tyr-91 (proton donor) is an active-site residue. NADP(+) is bound at residue Arg-144. The substrate site is built by Arg-144 and Lys-162. The active-site Proton acceptor is Lys-162. Mn(2+)-binding residues include Glu-234 and Asp-235. Asn-238 lines the NADP(+) pocket. Asp-258 provides a ligand contact to Mn(2+). Residues 291–294 (AGEA), Ser-325, Asn-397, and Asn-443 contribute to the NADP(+) site. Asn-443 contacts substrate.

It belongs to the malic enzymes family. As to quaternary structure, homotetramer. Mg(2+) is required as a cofactor. The cofactor is Mn(2+). In terms of processing, the N-terminus is blocked.

Its subcellular location is the cytoplasm. It carries out the reaction (S)-malate + NADP(+) = pyruvate + CO2 + NADPH. It catalyses the reaction oxaloacetate + H(+) = pyruvate + CO2. The protein is NADP-dependent malic enzyme (ME1) of Columba livia (Rock dove).